Here is a 477-residue protein sequence, read N- to C-terminus: Aspartyl/glutamyl-tRNA(Asn/Gln) amidotransferase subunit B (477 aa).

Belongs to the GatB/GatE family. GatB subfamily. In terms of assembly, heterotrimer of A, B and C subunits.

The enzyme catalyses L-glutamyl-tRNA(Gln) + L-glutamine + ATP + H2O = L-glutaminyl-tRNA(Gln) + L-glutamate + ADP + phosphate + H(+). It carries out the reaction L-aspartyl-tRNA(Asn) + L-glutamine + ATP + H2O = L-asparaginyl-tRNA(Asn) + L-glutamate + ADP + phosphate + 2 H(+). In terms of biological role, allows the formation of correctly charged Asn-tRNA(Asn) or Gln-tRNA(Gln) through the transamidation of misacylated Asp-tRNA(Asn) or Glu-tRNA(Gln) in organisms which lack either or both of asparaginyl-tRNA or glutaminyl-tRNA synthetases. The reaction takes place in the presence of glutamine and ATP through an activated phospho-Asp-tRNA(Asn) or phospho-Glu-tRNA(Gln). This is Aspartyl/glutamyl-tRNA(Asn/Gln) amidotransferase subunit B from Streptococcus gordonii (strain Challis / ATCC 35105 / BCRC 15272 / CH1 / DL1 / V288).